The primary structure comprises 229 residues: Triosephosphate isomerase (229 aa).

Residue N6–K8 participates in substrate binding. The active-site Electrophile is H85. E152 functions as the Proton acceptor in the catalytic mechanism. 2 residues coordinate substrate: G158 and S188.

It belongs to the triosephosphate isomerase family. As to quaternary structure, homodimer.

Its subcellular location is the cytoplasm. The enzyme catalyses D-glyceraldehyde 3-phosphate = dihydroxyacetone phosphate. The protein operates within carbohydrate biosynthesis; gluconeogenesis. It participates in carbohydrate degradation; glycolysis; D-glyceraldehyde 3-phosphate from glycerone phosphate: step 1/1. Functionally, involved in the gluconeogenesis. Catalyzes stereospecifically the conversion of dihydroxyacetone phosphate (DHAP) to D-glyceraldehyde-3-phosphate (G3P). This is Triosephosphate isomerase from Campylobacter curvus (strain 525.92).